The chain runs to 438 residues: ATP-dependent RNA helicase RhlB (438 aa).

The Q motif signature appears at 9 to 37 (QRFADLPLHPEVKQALAENGFEFCTPIQA). A Helicase ATP-binding domain is found at 40–219 (LPVLLQSKDI…YDHMNEPVKV (180 aa)). 53-60 (AQTGTGKT) lines the ATP pocket. The short motif at 165 to 168 (DEAD) is the DEAD box element. The Helicase C-terminal domain occupies 243 to 390 (KMRLLLTLIE…VSNYDSEALL (148 aa)). The interval 395 to 438 (TPAKIHRKHPSGTRNLRDRSGASRPGAQRSGARPPRHDRTRRHS) is disordered. The span at 428–438 (PPRHDRTRRHS) shows a compositional bias: basic residues.

It belongs to the DEAD box helicase family. RhlB subfamily. As to quaternary structure, component of the RNA degradosome, which is a multiprotein complex involved in RNA processing and mRNA degradation.

Its subcellular location is the cytoplasm. The catalysed reaction is ATP + H2O = ADP + phosphate + H(+). Its function is as follows. DEAD-box RNA helicase involved in RNA degradation. Has RNA-dependent ATPase activity and unwinds double-stranded RNA. The chain is ATP-dependent RNA helicase RhlB from Shewanella baltica (strain OS185).